A 1988-amino-acid chain; its full sequence is Sodium channel protein type 9 subunit alpha (1988 aa).

Residues 1 to 125 lie on the Cytoplasmic side of the membrane; sequence MAMLPPPGPQ…RRISIKILVH (125 aa). Residues 26–39 are compositionally biased toward basic and acidic residues; sequence RIAERKSKEPKEEK. The tract at residues 26 to 55 is disordered; it reads RIAERKSKEPKEEKKDDDEEAPKPSSDLEA. An I repeat occupies 112–410; sequence FSPLRRISIK…VAMAYEEQNQ (299 aa). A helical transmembrane segment spans residues 126–145; that stretch reads SLFSMLIMCTILTNCIFMTM. Over 146–150 the chain is Extracellular; sequence NNPPD. Residues 151–172 form a helical membrane-spanning segment; that stretch reads WTKNVEYTFTGIYTFESLVKIL. Over 173-185 the chain is Cytoplasmic; sequence ARGFCVGEFTFLR. Residues 186 to 204 form a helical membrane-spanning segment; the sequence is DPWNWLDFVVIVFAYLTEF. Residues 205 to 210 lie on the Extracellular side of the membrane; it reads VNLGNV. The N-linked (GlcNAc...) asparagine glycan is linked to Asn-209. A helical transmembrane segment spans residues 211-227; the sequence is SALRTFRVLRALKTISV. Over 228-241 the chain is Cytoplasmic; sequence IPGLKTIVGALIQS. A helical transmembrane segment spans residues 242-267; that stretch reads VKKLSDVMILTVFCLSVFALIGLQLF. At 268–346 the chain is on the extracellular side; sequence MGNLKHKCFR…PDYGYTSFDT (79 aa). Residues Cys-275 and Cys-324 are joined by a disulfide bond. The N-linked (GlcNAc...) asparagine glycan is linked to Asn-283. The pore-forming intramembrane region spans 347–363; sequence FSWAFLALFRLMTQDYW. Topologically, residues 364 to 376 are extracellular; the sequence is ENLYQQTLRAAGK. A helical membrane pass occupies residues 377 to 402; that stretch reads TYMIFFVVVIFLGSFYLINLILAVVA. At 403–745 the chain is on the cytoplasmic side; it reads MAYEEQNQAN…CIYFIVMDPF (343 aa). Over residues 461-471 the composition is skewed to low complexity; it reads SSSETSKLSSK. 2 disordered regions span residues 461–543 and 565–611; these read SSSE…RGSL and GSET…SPPM. The span at 474-486 shows a compositional bias: basic residues; that stretch reads KERRNRRKKKNQK. 2 stretches are compositionally biased toward basic and acidic residues: residues 489 to 510 and 573 to 585; these read SSGE…DSIR and DEHS…ESRR. An II repeat occupies 726 to 989; it reads CSPYWIKFKK…EEDPDANNLQ (264 aa). A helical membrane pass occupies residues 746–762; sequence VDLAITICIVLNTLFMA. Over 763-771 the chain is Extracellular; sequence MEHHPMTEE. Residues 772 to 796 traverse the membrane as a helical segment; sequence FKNVLAIGNLVFTGIFAAEMVLKLI. Residues 797 to 805 are Cytoplasmic-facing; the sequence is AMDPYEYFQ. Residues 806 to 822 form a helical membrane-spanning segment; it reads VGWNIFDSLIVTLSLVE. Residues 823–831 are Extracellular-facing; the sequence is LFLADVEGL. Residues 832–848 traverse the membrane as a helical segment; it reads SVLRSFRLLRVFKLAKS. The Cytoplasmic portion of the chain corresponds to 849–865; sequence WPTLNMLIKIIGNSVGA. The helical transmembrane segment at 866–888 threads the bilayer; the sequence is LGNLTLVLAIIVFIFAVVGMQLF. Topologically, residues 889–915 are extracellular; the sequence is GKSYKECVCKINDDCTLPRWHMNDFFH. Cys-897 and Cys-903 form a disulfide bridge. Residues 916 to 928 constitute an intramembrane region (pore-forming); that stretch reads SFLIVFRVLCGEW. Residues 929 to 940 are Extracellular-facing; sequence IETMWDCMEVAG. Cys-935 and Cys-944 are disulfide-bonded. Residues 941–967 form a helical membrane-spanning segment; sequence QAMCLIVYMMVMVIGNLVVLNLFLALL. Over 968–1187 the chain is Cytoplasmic; that stretch reads LSSFSSDNLT…WWNIRKTCYK (220 aa). The tract at residues 1102–1148 is disordered; sequence NAEELSSDSDSEYSKVRLNRSSSSECSTVDNPLPGEGEEAEAEPMNS. The segment covering 1120-1131 has biased composition (polar residues); the sequence is NRSSSSECSTVD. The segment covering 1137 to 1148 has biased composition (acidic residues); sequence EGEEAEAEPMNS. An III repeat occupies 1180–1488; that stretch reads NIRKTCYKIV…KKYYNAMKKL (309 aa). A helical membrane pass occupies residues 1188-1212; the sequence is IVEHSWFESFIVLMILLSSGALAFE. Residues 1213–1224 are Extracellular-facing; sequence DIYIERKKTIKI. The helical transmembrane segment at 1225 to 1250 threads the bilayer; it reads ILEYADKIFTYIFILEMLLKWIAYGY. The Cytoplasmic portion of the chain corresponds to 1251-1252; that stretch reads KT. A helical transmembrane segment spans residues 1253 to 1278; sequence YFTNAWCWLDFLIVDVSLVTLVANTL. Residues 1279-1287 are Extracellular-facing; that stretch reads GYSDLGPIK. A helical transmembrane segment spans residues 1288–1304; sequence SLRTLRALRPLRALSRF. Residues 1305-1317 lie on the Cytoplasmic side of the membrane; it reads EGMRVVVNALIGA. The helical transmembrane segment at 1318 to 1342 threads the bilayer; that stretch reads IPSIMNVLLVCLIFWLIFSIMGVNL. The Extracellular portion of the chain corresponds to 1343–1394; sequence FAGKFYECINTTDGSRFPASQVPNRSECFALMNVSQNVRWKNLKVNFDNVGL. Cysteines 1350 and 1370 form a disulfide. N-linked (GlcNAc...) asparagine glycans are attached at residues Asn-1352, Asn-1366, and Asn-1375. The segment at residues 1395–1405 is an intramembrane region (pore-forming); it reads GYLSLLQVATF. Over 1406-1431 the chain is Extracellular; sequence KGWTIIMYAAVDSVNVDKQPKYEYSL. The chain crosses the membrane as a helical span at residues 1432–1457; sequence YMYIYFVVFIIFGSFFTLNLFIGVII. Residues 1458–1514 lie on the Cytoplasmic side of the membrane; sequence DNFNQQKKKLGGQDIFMTEEQKKYYNAMKKLGSKKPQKPIPRPGNKIQGCIFDLVTN. Ser-1490 carries the post-translational modification Phosphoserine; by PKC. One copy of the IV repeat lies at 1497–1795; sequence IPRPGNKIQG…WEKFDPDATQ (299 aa). A helical membrane pass occupies residues 1515–1534; it reads QAFDISIMVLICLNMVTMMV. The Extracellular segment spans residues 1535–1545; it reads EKEGQSQHMTE. Residues 1546-1567 form a helical membrane-spanning segment; that stretch reads VLYWINVVFIILFTGECVLKLI. At 1568–1576 the chain is on the cytoplasmic side; it reads SLRHYYFTV. A helical membrane pass occupies residues 1577-1598; the sequence is GWNIFDFVVVIISIVGMFLADL. The Extracellular segment spans residues 1599 to 1607; it reads IETYFVSPT. The helical transmembrane segment at 1608-1627 threads the bilayer; sequence LFRVIRLARIGRILRLVKGA. The Cytoplasmic portion of the chain corresponds to 1628–1640; the sequence is KGIRTLLFALMMS. Residues 1641-1663 traverse the membrane as a helical segment; the sequence is LPALFNIGLLLFLVMFIYAIFGM. Over 1664–1686 the chain is Extracellular; it reads SNFAYVKKEDGINDMFNFETFGN. The segment at residues 1687–1699 is an intramembrane region (pore-forming); sequence SMICLFQITTSAG. The Extracellular segment spans residues 1700 to 1733; the sequence is WDGLLAPILNSKPPDCDPKKVHPGSSVEGDCGNP. Cys-1715 and Cys-1730 are oxidised to a cystine. A helical membrane pass occupies residues 1734–1759; it reads SVGIFYFVSYIIISFLVVVNMYIAVI. At 1760–1988 the chain is on the cytoplasmic side; the sequence is LENFSVATEE…KGKDSKESKK (229 aa). Residues 1889–1918 enclose the IQ domain; it reads EDVSATVIQRAYRRYRLRQNVKNISSIYIK. The interval 1934–1988 is disordered; that stretch reads FDNVNENSSPEKTDATSSTTSPPSYDSVTKPDKEKYEQDRTEKEDKGKDSKESKK. Low complexity predominate over residues 1948–1961; the sequence is ATSSTTSPPSYDSV. The segment covering 1962 to 1988 has biased composition (basic and acidic residues); that stretch reads TKPDKEKYEQDRTEKEDKGKDSKESKK.

Belongs to the sodium channel (TC 1.A.1.10) family. Nav1.7/SCN9A subfamily. The Nav1.7 voltage-gated sodium channel consists of an ion-conducting alpha subunit SCN9A which is functional on its own regulated by one or more beta-1 (SCN1B), beta-2 (SCN2B), beta-3 (SCN3B) and beta-4 (SCN4B) subunits. SCN1B and SCN3B are non-covalently associated with SCN9A. SCN2B and SCN4B are disulfide-linked to SCN9A. SCN1B regulates channel inactivation. Interacts with NEDD4 and NEDD4L; regulates Nav1.7 activity most probably through ubiquitination and subsequent endocytosis. Interacts with TMEM233; modulates the gating properties of NaV1.7. Post-translationally, phosphorylation at Ser-1490 by PKC in a highly conserved cytoplasmic loop increases peak sodium currents. In terms of processing, ubiquitinated by NEDD4L; which may promote its endocytosis. As to expression, expressed strongly in dorsal root ganglion, with only minor levels elsewhere in the body, smooth muscle cells, MTC cell line and C-cell carcinoma. Also expressed in vagus nerves within the head and neck region. Isoform 1 is expressed preferentially in the central and peripheral nervous system. Isoform 2 is expressed preferentially in the dorsal root ganglion.

Its subcellular location is the cell membrane. It localises to the cell projection. The protein resides in the neuron projection. It is found in the axon. It carries out the reaction Na(+)(in) = Na(+)(out). Its activity is regulated as follows. Inhibited by tetrodotoxin. Weakly inhibited by saxitoxin. Inhibited by the spider huwentoxin-IV that binds the extracellular loop S3-S4 of repeat II. Inhibited by the spider protoxin-II that binds the extracellular loop S3-S4 of repeats II and IV. Inhibited by the scorpion alpha-toxins CvIV4 and AaH2. Inhibited by the conotoxin GVIIJ. Inhibited by the spider beta/delta-theraphotoxin-Pre1a. Functionally, pore-forming subunit of Nav1.7, a voltage-gated sodium (Nav) channel that directly mediates the depolarizing phase of action potentials in excitable membranes. Navs, also called VGSCs (voltage-gated sodium channels) or VDSCs (voltage-dependent sodium channels), operate by switching between closed and open conformations depending on the voltage difference across the membrane. In the open conformation they allow Na(+) ions to selectively pass through the pore, along their electrochemical gradient. The influx of Na(+) ions provokes membrane depolarization, initiating the propagation of electrical signals throughout cells and tissues. Nav1.7 plays a crucial role in controlling the excitability and action potential propagation from nociceptor neurons, thereby contributing to the sensory perception of pain. This chain is Sodium channel protein type 9 subunit alpha, found in Homo sapiens (Human).